The chain runs to 426 residues: Enolase (426 aa).

Gly-41 provides a ligand contact to phosphoenolpyruvate. A Mg(2+)-binding site is contributed by Ser-43. Glu-165 provides a ligand contact to phosphoenolpyruvate. The (2R)-2-phosphoglycerate site is built by Glu-165 and Glu-206. The Proton donor role is filled by Glu-206. Mg(2+)-binding residues include Asp-243, Glu-286, and Asp-313. 5 residues coordinate phosphoenolpyruvate: Asp-313, Lys-338, Arg-367, Ser-368, and Lys-389. Lys-338, Arg-367, and Ser-368 together coordinate (2R)-2-phosphoglycerate. Catalysis depends on Lys-338, which acts as the Proton acceptor.

The protein belongs to the enolase family. As to quaternary structure, homodimer. The cofactor is Mg(2+).

Its subcellular location is the cytoplasm. The protein localises to the secreted. It localises to the cell surface. The enzyme catalyses (2R)-2-phosphoglycerate = phosphoenolpyruvate + H2O. The protein operates within carbohydrate degradation; glycolysis; pyruvate from D-glyceraldehyde 3-phosphate: step 4/5. Functionally, catalyzes the reversible conversion of 2-phosphoglycerate (2-PG) into phosphoenolpyruvate (PEP). It is essential for the degradation of carbohydrates via glycolysis. This is Enolase from Chloroflexus aurantiacus (strain ATCC 29366 / DSM 635 / J-10-fl).